We begin with the raw amino-acid sequence, 58 residues long: Bestoxin (58 aa).

The region spanning 3 to 58 is the LCN-type CS-alpha/beta domain; sequence VPGNYPLDKDGNTYTCLELGENKDCQKVCKLHGVQYGYCYAFSCWCKEYLDDKDSV. Cystine bridges form between Cys-18-Cys-41, Cys-27-Cys-46, and Cys-31-Cys-48.

As to expression, expressed by the venom gland.

It localises to the secreted. Functionally, beta toxins bind voltage-independently at site-4 of sodium channels (Nav) and shift the voltage of activation toward more negative potentials thereby affecting sodium channel activation and promoting spontaneous and repetitive firing. In mice, causes intense writhing. The chain is Bestoxin from Parabuthus transvaalicus (Transvaal thick-tailed scorpion).